The primary structure comprises 207 residues: Imidazole glycerol phosphate synthase subunit HisH (207 aa).

Positions 1-206 (MMIVIGYDAG…KEYVYENTAR (206 aa)) constitute a Glutamine amidotransferase type-1 domain. Cysteine 79 functions as the Nucleophile in the catalytic mechanism. Residues histidine 181 and glutamate 183 contribute to the active site.

In terms of assembly, heterodimer of HisH and HisF.

It is found in the cytoplasm. It carries out the reaction 5-[(5-phospho-1-deoxy-D-ribulos-1-ylimino)methylamino]-1-(5-phospho-beta-D-ribosyl)imidazole-4-carboxamide + L-glutamine = D-erythro-1-(imidazol-4-yl)glycerol 3-phosphate + 5-amino-1-(5-phospho-beta-D-ribosyl)imidazole-4-carboxamide + L-glutamate + H(+). It catalyses the reaction L-glutamine + H2O = L-glutamate + NH4(+). Its pathway is amino-acid biosynthesis; L-histidine biosynthesis; L-histidine from 5-phospho-alpha-D-ribose 1-diphosphate: step 5/9. Its function is as follows. IGPS catalyzes the conversion of PRFAR and glutamine to IGP, AICAR and glutamate. The HisH subunit catalyzes the hydrolysis of glutamine to glutamate and ammonia as part of the synthesis of IGP and AICAR. The resulting ammonia molecule is channeled to the active site of HisF. The sequence is that of Imidazole glycerol phosphate synthase subunit HisH from Streptococcus gordonii (strain Challis / ATCC 35105 / BCRC 15272 / CH1 / DL1 / V288).